We begin with the raw amino-acid sequence, 432 residues long: Adenylosuccinate synthetase (432 aa).

Residues 12-18 and 40-42 contribute to the GTP site; these read GDEGKGK and GHT. The Proton acceptor role is filled by Asp13. Mg(2+)-binding residues include Asp13 and Gly40. IMP contacts are provided by residues 13–16, 38–41, Thr132, Arg146, Gln226, Thr241, and Arg305; these read DEGK and NAGH. His41 functions as the Proton donor in the catalytic mechanism. A substrate-binding site is contributed by 301 to 307; the sequence is VVTGRKR. GTP-binding positions include Arg307, 333 to 335, and 415 to 417; these read KLD and STS.

It belongs to the adenylosuccinate synthetase family. In terms of assembly, homodimer. Requires Mg(2+) as cofactor.

The protein localises to the cytoplasm. The enzyme catalyses IMP + L-aspartate + GTP = N(6)-(1,2-dicarboxyethyl)-AMP + GDP + phosphate + 2 H(+). It functions in the pathway purine metabolism; AMP biosynthesis via de novo pathway; AMP from IMP: step 1/2. Its function is as follows. Plays an important role in the de novo pathway of purine nucleotide biosynthesis. Catalyzes the first committed step in the biosynthesis of AMP from IMP. This is Adenylosuccinate synthetase from Rhizobium johnstonii (strain DSM 114642 / LMG 32736 / 3841) (Rhizobium leguminosarum bv. viciae).